Here is a 247-residue protein sequence, read N- to C-terminus: Cell division protein ZapD (247 aa).

This sequence belongs to the ZapD family. Interacts with FtsZ.

It is found in the cytoplasm. Cell division factor that enhances FtsZ-ring assembly. Directly interacts with FtsZ and promotes bundling of FtsZ protofilaments, with a reduction in FtsZ GTPase activity. The protein is Cell division protein ZapD of Salmonella choleraesuis (strain SC-B67).